Here is a 131-residue protein sequence, read N- to C-terminus: M-zodatoxin-Lt8m (131 aa).

An N-terminal signal peptide occupies residues 1 to 20 (MKYFVVALALVAAFACIAES). A propeptide spanning residues 21–60 (KPAESEHELAEVEEENELADLEDAVWLEHLADLSDLEEAR) is cleaved from the precursor.

The protein belongs to the cationic peptide 06 (cytoinsectotoxin) family. As to expression, expressed by the venom gland.

The protein localises to the secreted. Its function is as follows. Insecticidal, cytolytic and antimicrobial peptide. Forms voltage-dependent, ion-permeable channels in membranes. At high concentration causes cell membrane lysis. The sequence is that of M-zodatoxin-Lt8m (cit 1-13) from Lachesana tarabaevi (Spider).